Here is a 196-residue protein sequence, read N- to C-terminus: Holliday junction branch migration complex subunit RuvA (196 aa).

The segment at 1 to 63 (MYDYIKGKLS…DDAHLLFGFH (63 aa)) is domain I. A domain II region spans residues 64 to 142 (TENEKEIFLN…EASGESATSR (79 aa)). The flexible linker stretch occupies residues 143 to 148 (KVSSEQ). A domain III region spans residues 148–196 (QNSNLEEAMEALLALGYKATELKKVKAFFEGTNETVEQYIKSSLKMLMK).

The protein belongs to the RuvA family. Homotetramer. Forms an RuvA(8)-RuvB(12)-Holliday junction (HJ) complex. HJ DNA is sandwiched between 2 RuvA tetramers; dsDNA enters through RuvA and exits via RuvB. An RuvB hexamer assembles on each DNA strand where it exits the tetramer. Each RuvB hexamer is contacted by two RuvA subunits (via domain III) on 2 adjacent RuvB subunits; this complex drives branch migration. In the full resolvosome a probable DNA-RuvA(4)-RuvB(12)-RuvC(2) complex forms which resolves the HJ.

The protein localises to the cytoplasm. In terms of biological role, the RuvA-RuvB-RuvC complex processes Holliday junction (HJ) DNA during genetic recombination and DNA repair, while the RuvA-RuvB complex plays an important role in the rescue of blocked DNA replication forks via replication fork reversal (RFR). RuvA specifically binds to HJ cruciform DNA, conferring on it an open structure. The RuvB hexamer acts as an ATP-dependent pump, pulling dsDNA into and through the RuvAB complex. HJ branch migration allows RuvC to scan DNA until it finds its consensus sequence, where it cleaves and resolves the cruciform DNA. This Streptococcus agalactiae serotype III (strain NEM316) protein is Holliday junction branch migration complex subunit RuvA.